The primary structure comprises 209 residues: MVQERQSQGKGVCWTLRLWSAAVISMLLLSTCFIASCVVTYQFIMDQPSRRLYELHTYHSSLTCFSEGTMVSEKMWGCCPNHWKSFGSSCYLISTKENFWSTSEQNCVQMGAHLVVINTEAEQNFITQQLNESLSYFLGLSDPQGNGKWQWIDDTPFSQNVRFWHPHEPNLPEERCVSIVYWNPSKWGWNDVFCDSKHNSICEMKKIYL.

At 1 to 20 the chain is on the cytoplasmic side; the sequence is MVQERQSQGKGVCWTLRLWS. The chain crosses the membrane as a helical; Signal-anchor for type II membrane protein span at residues 21–43; it reads AAVISMLLLSTCFIASCVVTYQF. At 44-209 the chain is on the extracellular side; that stretch reads IMDQPSRRLY…SICEMKKIYL (166 aa). 4 disulfides stabilise this stretch: Cys-64–Cys-78, Cys-79–Cys-90, Cys-107–Cys-202, and Cys-176–Cys-194. Residues 86-203 form the C-type lectin domain; the sequence is FGSSCYLIST…CDSKHNSICE (118 aa). Ca(2+) contacts are provided by Val-116, Asn-118, and Glu-122. Asn-131 carries N-linked (GlcNAc...) asparagine glycosylation. Ca(2+) is bound by residues Glu-168, Asn-170, and Glu-174. Residues 168 to 170, Glu-174, Trp-182, and 190 to 191 each bind alpha-D-mannopyranose; these read EPN and ND. Ca(2+)-binding residues include Asn-190, Asp-191, and Glu-203.

As to quaternary structure, associated with FCER1G. Heterodimer with CLEC4D; this heterodimer forms a pattern recognition receptor (PRR) against fungal infection. Expressed by the XS52 DC (dendritic cell) line (at protein level). Expressed constitutively by the epidermis, and skin resident DC appear to be the major source of this expression. Expressed in the spleen and thymus. Expression was undetectable in non-DC lines, including macrophage lines (J774 and Raw), T-cell lines (7-17, HDK-1, and D10), B-cell hybridoma (5C5), a keratinocyte line (Pam 212), and a fibroblast line (NS01).

Its subcellular location is the cell membrane. Functionally, calcium-dependent lectin that acts as a pattern recognition receptor (PRR) of the innate immune system: specifically recognizes and binds alpha-mannans on C.albicans hypheas. Binding of C.albicans alpha-mannans to this receptor complex leads to phosphorylation of the immunoreceptor tyrosine-based activation motif (ITAM) of FCER1G, triggering activation of SYK, CARD9 and NF-kappa-B, consequently driving maturation of antigen-presenting cells and shaping antigen-specific priming of T-cells toward effector T-helper 1 and T-helper 17 cell subtypes. Also recognizes, in a mannose-dependent manner, allergens from house dust mite and fungi, by promoting cysteinyl leukotriene production. Recognizes soluble elements from the eggs of Shistosoma mansoni altering adaptive immune responses. The polypeptide is C-type lectin domain family 6 member A (Mus musculus (Mouse)).